The chain runs to 434 residues: Zinc finger CCCH domain-containing protein 10 (434 aa).

The disordered stretch occupies residues 1–37; it reads MPDRDSYANGTGSSGGGPGGGGSEEASGAGVGSGGAS. Positions 12–35 are enriched in gly residues; it reads GSSGGGPGGGGSEEASGAGVGSGG. C3H1-type zinc fingers lie at residues 36–63, 73–99, and 134–161; these read ASSDAICRDFLRNVCKRGKRCRYRHPDM, KNEFIFCHDFQNKECSRPNCRFIHGSK, and KEEVPICRDFLKGDCQRGAKCKFRHLQR. Omega-N-methylarginine is present on residues Arg-185 and Arg-186. Residues 196–207 show a composition bias toward basic and acidic residues; that stretch reads PDRGFEDHEPGP. The tract at residues 196–217 is disordered; that stretch reads PDRGFEDHEPGPKRRRGGCCPP. The stretch at 234–280 forms a coiled coil; the sequence is GVECRLLEEENAMLRKRVEELKKQVSNLLATNEVLLEQNAQFRNQAK. The span at 314-330 shows a compositional bias: polar residues; it reads TTLSSQALQPRPVSQQE. Positions 314 to 362 are disordered; that stretch reads TTLSSQALQPRPVSQQELVAPAGAPAAPPTNAAPPAAPPPPPPHLTPEI. Residues 339–358 are compositionally biased toward pro residues; that stretch reads AAPPTNAAPPAAPPPPPPHL.

The protein resides in the nucleus. Its function is as follows. Specific regulator of miRNA biogenesis. Binds, via the C3H1-type zinc finger domains, to the binding motif 5'-GCAGCGC-3' on microRNA pri-MIR143 and negatively regulates the processing to mature microRNA. In Homo sapiens (Human), this protein is Zinc finger CCCH domain-containing protein 10 (ZC3H10).